Consider the following 186-residue polypeptide: NADH-dependent FMN reductase SfnE (186 aa).

It belongs to the SsuE family.

It catalyses the reaction FMNH2 + NAD(+) = FMN + NADH + 2 H(+). Its function is as follows. Involved in the dimethyl sulfide degradation pathway. Catalyzes the NADH-dependent reduction of FMN. This is NADH-dependent FMN reductase SfnE from Pseudomonas putida (Arthrobacter siderocapsulatus).